Reading from the N-terminus, the 430-residue chain is tRNA(Ile)-lysidine synthase (430 aa).

27-32 is an ATP binding site; the sequence is SGGSDS.

This sequence belongs to the tRNA(Ile)-lysidine synthase family.

The protein localises to the cytoplasm. The catalysed reaction is cytidine(34) in tRNA(Ile2) + L-lysine + ATP = lysidine(34) in tRNA(Ile2) + AMP + diphosphate + H(+). Ligates lysine onto the cytidine present at position 34 of the AUA codon-specific tRNA(Ile) that contains the anticodon CAU, in an ATP-dependent manner. Cytidine is converted to lysidine, thus changing the amino acid specificity of the tRNA from methionine to isoleucine. In Rickettsia prowazekii (strain Madrid E), this protein is tRNA(Ile)-lysidine synthase.